We begin with the raw amino-acid sequence, 296 residues long: Small ribosomal subunit biogenesis GTPase RsgA (296 aa).

The CP-type G domain maps to 63-224; the sequence is RNQLVRPPVA…IADTPGFSSY (162 aa). GTP contacts are provided by residues 112–115 and 167–175; these read SKTD and GQTGAGKST. Positions 248, 253, 255, and 261 each coordinate Zn(2+).

This sequence belongs to the TRAFAC class YlqF/YawG GTPase family. RsgA subfamily. In terms of assembly, monomer. Associates with 30S ribosomal subunit, binds 16S rRNA. Requires Zn(2+) as cofactor.

The protein resides in the cytoplasm. One of several proteins that assist in the late maturation steps of the functional core of the 30S ribosomal subunit. Helps release RbfA from mature subunits. May play a role in the assembly of ribosomal proteins into the subunit. Circularly permuted GTPase that catalyzes slow GTP hydrolysis, GTPase activity is stimulated by the 30S ribosomal subunit. This is Small ribosomal subunit biogenesis GTPase RsgA from Limosilactobacillus reuteri (strain DSM 20016) (Lactobacillus reuteri).